The sequence spans 491 residues: Delayed-rectifier potassium channel regulatory subunit KCNS3 (491 aa).

Over 1 to 182 the chain is Cytoplasmic; it reads MVFGEFFHRP…IRMENPAYCL (182 aa). Residues 183–204 form a helical membrane-spanning segment; sequence SAKLIAISSLSVVLASIVAMCV. Topologically, residues 205–220 are extracellular; sequence HSMSEFQNEDGEVDDP. Residues 221–243 traverse the membrane as a helical segment; sequence VLEGVEIACIAWFTGELAVRLVA. Residues 244 to 254 are Cytoplasmic-facing; sequence APCQKKFWKNP. A helical transmembrane segment spans residues 255-275; sequence LNIIDFVSIIPFYATLAVDTK. At 276 to 285 the chain is on the extracellular side; the sequence is EEESEDIENM. Residues 286-306 traverse the membrane as a helical; Voltage-sensor segment; it reads GKVVQILRLMRIFRILKLARH. Topologically, residues 307 to 321 are cytoplasmic; the sequence is SVGLRSLGATLRHSY. Residues 322–343 form a helical membrane-spanning segment; the sequence is HEVGLLLLFLSVGISIFSVLIY. Residues 344 to 357 lie on the Extracellular side of the membrane; sequence SVEKDDHTSSLTSI. An intramembrane region (helical) is located at residues 358 to 369; sequence PICWWWATISMT. The short motif at 370–375 is the Selectivity filter element; it reads TVGYGD. An intramembrane segment occupies 370 to 377; it reads TVGYGDTH. The Extracellular portion of the chain corresponds to 378-384; the sequence is PVTLAGK. Residues 385–413 traverse the membrane as a helical segment; sequence LIASTCIICGILVVALPITIIFNKFSKYY. Over 414–491 the chain is Cytoplasmic; it reads QKQKDIDVDQ…TASLENCTAK (78 aa).

The protein belongs to the potassium channel family. S (TC 1.A.1.2) subfamily. Kv9.3/KCNS3 sub-subfamily. As to quaternary structure, heterotetramer with KCNB1. Does not form homomultimers.

The protein localises to the cell membrane. Potassium channel regulatory subunit that modulates the delayed rectifier potassium channel activity of KCNB1 by namely slowing down the deactivation and inactivation time constants. While it does not form functional channel on its own, it can form functional heterotetrameric channels with KCNB1. The chain is Delayed-rectifier potassium channel regulatory subunit KCNS3 from Oryctolagus cuniculus (Rabbit).